A 303-amino-acid chain; its full sequence is Bifunctional protein FolD (303 aa).

NADP(+)-binding positions include 165–167 (GRS), Ser-190, and Ile-231.

Belongs to the tetrahydrofolate dehydrogenase/cyclohydrolase family. As to quaternary structure, homodimer.

It carries out the reaction (6R)-5,10-methylene-5,6,7,8-tetrahydrofolate + NADP(+) = (6R)-5,10-methenyltetrahydrofolate + NADPH. It catalyses the reaction (6R)-5,10-methenyltetrahydrofolate + H2O = (6R)-10-formyltetrahydrofolate + H(+). It functions in the pathway one-carbon metabolism; tetrahydrofolate interconversion. Catalyzes the oxidation of 5,10-methylenetetrahydrofolate to 5,10-methenyltetrahydrofolate and then the hydrolysis of 5,10-methenyltetrahydrofolate to 10-formyltetrahydrofolate. This Prochlorococcus marinus (strain NATL1A) protein is Bifunctional protein FolD.